Consider the following 189-residue polypeptide: UPF0312 protein VIBHAR_05924 (189 aa).

The N-terminal stretch at 1–22 (MKKSLFATGLAIAIALPFGANA) is a signal peptide.

Belongs to the UPF0312 family. Type 1 subfamily.

Its subcellular location is the periplasm. The sequence is that of UPF0312 protein VIBHAR_05924 from Vibrio campbellii (strain ATCC BAA-1116).